The following is a 330-amino-acid chain: 4-hydroxythreonine-4-phosphate dehydrogenase (330 aa).

Residues H134 and T135 each contribute to the substrate site. The a divalent metal cation site is built by H164, H209, and H264. Positions 272, 281, and 290 each coordinate substrate.

Belongs to the PdxA family. In terms of assembly, homodimer. Zn(2+) serves as cofactor. The cofactor is Mg(2+). It depends on Co(2+) as a cofactor.

It is found in the cytoplasm. The enzyme catalyses 4-(phosphooxy)-L-threonine + NAD(+) = 3-amino-2-oxopropyl phosphate + CO2 + NADH. The protein operates within cofactor biosynthesis; pyridoxine 5'-phosphate biosynthesis; pyridoxine 5'-phosphate from D-erythrose 4-phosphate: step 4/5. Its function is as follows. Catalyzes the NAD(P)-dependent oxidation of 4-(phosphooxy)-L-threonine (HTP) into 2-amino-3-oxo-4-(phosphooxy)butyric acid which spontaneously decarboxylates to form 3-amino-2-oxopropyl phosphate (AHAP). The chain is 4-hydroxythreonine-4-phosphate dehydrogenase from Pseudoalteromonas translucida (strain TAC 125).